The chain runs to 417 residues: Indole-3-pyruvate monooxygenase YUCCA6 (417 aa).

FAD is bound at residue 36–41 (GAGPSG). 204–209 (GCGNSG) contacts NADP(+).

Belongs to the FMO family. FAD serves as cofactor. As to expression, highly expressed in roots but modestly expressed in the cauline leaves and flowers. Expressed in anthers.

It is found in the cytoplasm. It carries out the reaction indole-3-pyruvate + NADPH + O2 + H(+) = (indol-3-yl)acetate + CO2 + NADP(+) + H2O. It functions in the pathway plant hormone metabolism; auxin biosynthesis. Involved in auxin biosynthesis via the indole-3-pyruvic acid (IPA) pathway. Also able to convert in vitro phenyl pyruvate (PPA) to phenyl acetic acid (PAA). Required for the formation of floral organs and vascular tissues. Belongs to the set of redundant YUCCA genes probably responsible for auxin biosynthesis in shoots. The polypeptide is Indole-3-pyruvate monooxygenase YUCCA6 (YUC6) (Arabidopsis thaliana (Mouse-ear cress)).